A 490-amino-acid polypeptide reads, in one-letter code: Bifunctional protein HldE (490 aa).

The ribokinase stretch occupies residues 1–330 (MSRFDTLLQS…RKILPHASLA (330 aa)). 205 to 208 (NRKE) contacts ATP. D275 is an active-site residue. The segment at 358 to 490 (FTNGCFDILH…LVEKAREGTT (133 aa)) is cytidylyltransferase.

It in the N-terminal section; belongs to the carbohydrate kinase PfkB family. In the C-terminal section; belongs to the cytidylyltransferase family. In terms of assembly, homodimer.

The catalysed reaction is D-glycero-beta-D-manno-heptose 7-phosphate + ATP = D-glycero-beta-D-manno-heptose 1,7-bisphosphate + ADP + H(+). It catalyses the reaction D-glycero-beta-D-manno-heptose 1-phosphate + ATP + H(+) = ADP-D-glycero-beta-D-manno-heptose + diphosphate. Its pathway is nucleotide-sugar biosynthesis; ADP-L-glycero-beta-D-manno-heptose biosynthesis; ADP-L-glycero-beta-D-manno-heptose from D-glycero-beta-D-manno-heptose 7-phosphate: step 1/4. It participates in nucleotide-sugar biosynthesis; ADP-L-glycero-beta-D-manno-heptose biosynthesis; ADP-L-glycero-beta-D-manno-heptose from D-glycero-beta-D-manno-heptose 7-phosphate: step 3/4. Catalyzes the phosphorylation of D-glycero-D-manno-heptose 7-phosphate at the C-1 position to selectively form D-glycero-beta-D-manno-heptose-1,7-bisphosphate. Its function is as follows. Catalyzes the ADP transfer from ATP to D-glycero-beta-D-manno-heptose 1-phosphate, yielding ADP-D-glycero-beta-D-manno-heptose. The chain is Bifunctional protein HldE from Rhodopseudomonas palustris (strain BisB5).